The sequence spans 176 residues: MSAGGASVPPPPNPAVSFPVPRVTLPAGPDILRTYSGAFVCLEILFGGLVWILVASSNVPLPLLQGWVMFVSVTAFFFSLLFLGLFLSGMVTQIDANWNFLDFAYHFTVFVFYFGAFLLEAAATSLHDLHYNITMTGQPLLNDNQYNINVAASIFAFMTTACYGCSLGLALRRWRP.

The Cytoplasmic portion of the chain corresponds to 1 to 34; the sequence is MSAGGASVPPPPNPAVSFPVPRVTLPAGPDILRT. The MARVEL domain maps to 31 to 175; sequence ILRTYSGAFV…SLGLALRRWR (145 aa). Residues 35–55 traverse the membrane as a helical segment; it reads YSGAFVCLEILFGGLVWILVA. The Lumenal segment spans residues 56 to 66; sequence SSNVPLPLLQG. Residues 67–87 form a helical membrane-spanning segment; the sequence is WVMFVSVTAFFFSLLFLGLFL. Residues 88-102 are Cytoplasmic-facing; sequence SGMVTQIDANWNFLD. Residues 103 to 123 form a helical membrane-spanning segment; sequence FAYHFTVFVFYFGAFLLEAAA. At 124-149 the chain is on the lumenal side; it reads TSLHDLHYNITMTGQPLLNDNQYNIN. Asn-132 carries an N-linked (GlcNAc...) asparagine glycan. Residues 150 to 170 traverse the membrane as a helical segment; the sequence is VAASIFAFMTTACYGCSLGLA. The Cytoplasmic segment spans residues 171-176; that stretch reads LRRWRP.

The protein belongs to the MAL family. In terms of assembly, interacts with TPD52L2.

It is found in the cell membrane. Its subcellular location is the apical cell membrane. Member of the machinery of polarized transport. Required for the indirect transcytotic route at the step of the egress of the transcytosing cargo from perinuclear endosomes in order for it to travel to the apical surface via a raft-dependent pathway. The protein is Protein MAL2 (MAL2) of Pongo abelii (Sumatran orangutan).